A 413-amino-acid chain; its full sequence is Cardiolipin synthase B (413 aa).

PLD phosphodiesterase domains follow at residues 108–135 and 285–312; these read VFRRMHRKIVVIDARIAFIGGLNYSSEH and RRRPLHGKVALMDDHWATVGSSNLDPLS. Active-site residues include histidine 113, lysine 115, aspartate 120, histidine 290, lysine 292, and aspartate 297. The segment at 388–413 is disordered; that stretch reads TQVDPPAQPTMETQDRVETENTGVNP.

This sequence belongs to the phospholipase D family. Cardiolipin synthase subfamily. ClsB sub-subfamily.

The protein resides in the cell membrane. It catalyses the reaction 2 a 1,2-diacyl-sn-glycero-3-phospho-(1'-sn-glycerol) = a cardiolipin + glycerol. Functionally, catalyzes the phosphatidyl group transfer from one phosphatidylglycerol molecule to another to form cardiolipin (CL) (diphosphatidylglycerol) and glycerol. The chain is Cardiolipin synthase B from Shigella flexneri.